Here is a 72-residue protein sequence, read N- to C-terminus: Translation initiation factor IF-1 (72 aa).

Residues 1-72 (MAKDDVIEID…DKGRITYRYK (72 aa)) form the S1-like domain.

This sequence belongs to the IF-1 family. Component of the 30S ribosomal translation pre-initiation complex which assembles on the 30S ribosome in the order IF-2 and IF-3, IF-1 and N-formylmethionyl-tRNA(fMet); mRNA recruitment can occur at any time during PIC assembly.

The protein localises to the cytoplasm. Functionally, one of the essential components for the initiation of protein synthesis. Stabilizes the binding of IF-2 and IF-3 on the 30S subunit to which N-formylmethionyl-tRNA(fMet) subsequently binds. Helps modulate mRNA selection, yielding the 30S pre-initiation complex (PIC). Upon addition of the 50S ribosomal subunit IF-1, IF-2 and IF-3 are released leaving the mature 70S translation initiation complex. This is Translation initiation factor IF-1 from Campylobacter curvus (strain 525.92).